Here is a 511-residue protein sequence, read N- to C-terminus: NAD(P)H-quinone oxidoreductase subunit 2 B, chloroplastic (511 aa).

The next 13 membrane-spanning stretches (helical) occupy residues 24–44 (LLLF…GLIL), 57–77 (IPWL…ALLF), 99–119 (IFQF…VEYI), 124–144 (MAIT…MFLC), 149–169 (LITI…LSGY), 183–203 (YLLM…WLYG), 227–247 (PGIS…LSPA), 295–315 (WHLL…LIAI), 323–343 (MLAY…IVGD), 354–374 (YMLF…LFGL), 395–415 (ALSL…AGFF), 418–438 (LHLF…IGLL), and 484–504 (MIVC…IIAI).

This sequence belongs to the complex I subunit 2 family. NDH is composed of at least 16 different subunits, 5 of which are encoded in the nucleus.

It is found in the plastid. Its subcellular location is the chloroplast thylakoid membrane. It catalyses the reaction a plastoquinone + NADH + (n+1) H(+)(in) = a plastoquinol + NAD(+) + n H(+)(out). It carries out the reaction a plastoquinone + NADPH + (n+1) H(+)(in) = a plastoquinol + NADP(+) + n H(+)(out). In terms of biological role, NDH shuttles electrons from NAD(P)H:plastoquinone, via FMN and iron-sulfur (Fe-S) centers, to quinones in the photosynthetic chain and possibly in a chloroplast respiratory chain. The immediate electron acceptor for the enzyme in this species is believed to be plastoquinone. Couples the redox reaction to proton translocation, and thus conserves the redox energy in a proton gradient. This is NAD(P)H-quinone oxidoreductase subunit 2 B, chloroplastic from Nandina domestica (Heavenly bamboo).